A 135-amino-acid polypeptide reads, in one-letter code: HTH-type transcriptional repressor RghR (135 aa).

Residues 8–63 enclose the HTH cro/C1-type domain; it reads LRALREERKLTVNQLATYSGVSAAGISRIENGKRGVPKPATIKKLAEALKIPYEGL. The segment at residues 19 to 38 is a DNA-binding region (H-T-H motif); that stretch reads VNQLATYSGVSAAGISRIEN.

In terms of biological role, represses the expression of yvaM and both rapG and rapH. Binds directly to the promoter regions of yvaM, rapG and rapH. This chain is HTH-type transcriptional repressor RghR (rghR), found in Bacillus subtilis (strain 168).